The sequence spans 586 residues: Arginine--tRNA ligase (586 aa).

Residues 128–138 (ANPTGPLHVGH) carry the 'HIGH' region motif.

Belongs to the class-I aminoacyl-tRNA synthetase family. As to quaternary structure, monomer.

Its subcellular location is the cytoplasm. It carries out the reaction tRNA(Arg) + L-arginine + ATP = L-arginyl-tRNA(Arg) + AMP + diphosphate. This Coxiella burnetii (strain RSA 331 / Henzerling II) protein is Arginine--tRNA ligase.